A 256-amino-acid chain; its full sequence is Type III pantothenate kinase (256 aa).

ATP is bound at residue 6–13; that stretch reads DVGNTNMV. Substrate-binding positions include Tyr100 and 107-110; that span reads GADR. Asp109 functions as the Proton acceptor in the catalytic mechanism. Asp129 provides a ligand contact to K(+). Thr132 provides a ligand contact to ATP. Thr184 lines the substrate pocket.

This sequence belongs to the type III pantothenate kinase family. Homodimer. It depends on NH4(+) as a cofactor. K(+) is required as a cofactor.

The protein localises to the cytoplasm. It catalyses the reaction (R)-pantothenate + ATP = (R)-4'-phosphopantothenate + ADP + H(+). The protein operates within cofactor biosynthesis; coenzyme A biosynthesis; CoA from (R)-pantothenate: step 1/5. Its function is as follows. Catalyzes the phosphorylation of pantothenate (Pan), the first step in CoA biosynthesis. This chain is Type III pantothenate kinase, found in Clostridioides difficile (strain 630) (Peptoclostridium difficile).